Here is an 85-residue protein sequence, read N- to C-terminus: U1-theraphotoxin-Hs1a (85 aa).

An N-terminal signal peptide occupies residues 1–22 (MKVTLIAILTCAAVLVLHTTAA). Positions 23 to 48 (EELEAESQLMEVGMPDTELAAVDEER) are excised as a propeptide. Disulfide bonds link Cys52-Cys66, Cys56-Cys77, and Cys71-Cys82.

As to quaternary structure, heterodimer composed of the two variants Ile-58 and Gln-58. As to expression, expressed by the venom gland.

The protein localises to the secreted. Its function is as follows. Lethal neurotoxin that blocks neuromuscular transmission. Acts cooperatively to potentiate the activity of huwentoxin-I. This toxin is active against insects. This chain is U1-theraphotoxin-Hs1a, found in Cyriopagopus schmidti (Chinese bird spider).